Consider the following 188-residue polypeptide: HGPRTase-like protein (188 aa).

Belongs to the purine/pyrimidine phosphoribosyltransferase family. Archaeal HPRT subfamily.

Functionally, may catalyze a purine salvage reaction, the substrate is unknown. The chain is HGPRTase-like protein from Halobacterium salinarum (strain ATCC 29341 / DSM 671 / R1).